Consider the following 527-residue polypeptide: L-amino-acid oxidase (527 aa).

Residues 1–27 (MDLHRAPWKSSAAAAVLLLALFSGAAA) form the signal peptide. The cysteines at positions 37 and 200 are disulfide-linked. N58 is a glycosylation site (N-linked (GlcNAc...) asparagine). Residues 70-71 (VA), 90-91 (EA), R98, 114-117 (GAMR), and V288 contribute to the FAD site. Residue R117 coordinates substrate. A glycan (N-linked (GlcNAc...) asparagine) is linked at N393. A substrate-binding site is contributed by Y403. FAD is bound by residues E485 and 492-497 (AWMESA). 492-493 (AW) serves as a coordination point for substrate.

Homodimer. FAD is required as a cofactor. As to expression, expression mainly observed in plasma, spleen, kidney and gills with low levels detected in blood and no expression detected in brain, liver, heart, muscle or intestine (at protein level).

Its subcellular location is the secreted. The enzyme catalyses an L-alpha-amino acid + O2 + H2O = a 2-oxocarboxylate + H2O2 + NH4(+). Inhibits the growth of both Gram-negative and Gram-positive bacteria. Displays strong antibacterial activity towards V.cholerae and E.tarda. Causes deformation of the surface of S.aureus and the formation of pores on the surface of E.coli. Strong antiparasitic activity is seen towards C.irritans, T.brucei and I.multifiliis. Cilia of treated theronts are lost and the macronucleus swells, inducing cell membrane rupture and efflux of the cytoplasm. This Siganus canaliculatus (White-spotted spinefoot) protein is L-amino-acid oxidase.